The sequence spans 583 residues: Probable phosphoglucomutase, cytoplasmic 1 (583 aa).

2 residues coordinate alpha-D-glucose 1,6-bisphosphate: arginine 24 and serine 123. Serine 123 serves as the catalytic Phosphoserine intermediate. Mg(2+)-binding residues include serine 123, aspartate 299, aspartate 301, and aspartate 303. At serine 123 the chain carries Phosphoserine. Residues aspartate 303, arginine 304, threonine 367, glutamate 386, serine 388, and lysine 399 each contribute to the alpha-D-glucose 1,6-bisphosphate site.

This sequence belongs to the phosphohexose mutase family. In terms of assembly, monomer. It depends on Mg(2+) as a cofactor.

The protein resides in the cytoplasm. The catalysed reaction is alpha-D-glucose 1-phosphate = alpha-D-glucose 6-phosphate. It catalyses the reaction O-phospho-L-seryl-[protein] + alpha-D-glucose 1-phosphate = alpha-D-glucose 1,6-bisphosphate + L-seryl-[protein]. It carries out the reaction alpha-D-glucose 1,6-bisphosphate + L-seryl-[protein] = O-phospho-L-seryl-[protein] + alpha-D-glucose 6-phosphate. Catalyzes the reversible isomerization of alpha-D-glucose 1-phosphate to alpha-D-glucose 6-phosphate. The mechanism proceeds via the intermediate compound alpha-D-glucose 1,6-bisphosphate. This enzyme participates in both the breakdown and synthesis of glucose. The sequence is that of Probable phosphoglucomutase, cytoplasmic 1 from Arabidopsis thaliana (Mouse-ear cress).